The primary structure comprises 138 residues: Putative pre-16S rRNA nuclease (138 aa).

The protein belongs to the YqgF nuclease family.

The protein localises to the cytoplasm. Could be a nuclease involved in processing of the 5'-end of pre-16S rRNA. The protein is Putative pre-16S rRNA nuclease of Enterobacter sp. (strain 638).